The sequence spans 455 residues: Chromosomal replication initiator protein DnaA (455 aa).

Residues 1–74 (MFNFEKFWQH…IQSAYGYAGV (74 aa)) form a domain I, interacts with DnaA modulators region. Positions 74 to 117 (VELLPVFQISEDSDTPERIVTPEPQHNLQTTPTRAPQREFAKDL) are domain II. The interval 118–334 (KLNEKYTFDN…GALVKVQAYA (217 aa)) is domain III, AAA+ region. The ATP site is built by Gly162, Gly164, Lys165, and Thr166. The domain IV, binds dsDNA stretch occupies residues 335–455 (TIEKADIDIN…VFDLKQMLEH (121 aa)).

Belongs to the DnaA family. In terms of assembly, oligomerizes as a right-handed, spiral filament on DNA at oriC.

It is found in the cytoplasm. Functionally, plays an essential role in the initiation and regulation of chromosomal replication. ATP-DnaA binds to the origin of replication (oriC) to initiate formation of the DNA replication initiation complex once per cell cycle. Binds the DnaA box (a 9 base pair repeat at the origin) and separates the double-stranded (ds)DNA. Forms a right-handed helical filament on oriC DNA; dsDNA binds to the exterior of the filament while single-stranded (ss)DNA is stabiized in the filament's interior. The ATP-DnaA-oriC complex binds and stabilizes one strand of the AT-rich DNA unwinding element (DUE), permitting loading of DNA polymerase. After initiation quickly degrades to an ADP-DnaA complex that is not apt for DNA replication. Binds acidic phospholipids. The sequence is that of Chromosomal replication initiator protein DnaA from Lactobacillus acidophilus (strain ATCC 700396 / NCK56 / N2 / NCFM).